A 443-amino-acid polypeptide reads, in one-letter code: MKLRFAPSPTGLIHVGNARQAIANALYARRHGGTFQLRIDDTDRERSRDEYVDALHTDLAWLGITWDETFRQSDRLDRYAAAIETLKASGRLYPCFESEQELASKREARIRMRKPPIYDRAMLRMTAEQRAQAEANGKVPYWRFRLSDQDRGVDDMVMGRSQVKLQSISDPVLVRADGTVLYTLASVVDDMETGVTHVLRGEDHLTNTGVQIDIAEALGGKVGQFAFAHLPLLLDEAGGKLSKRFDGLSIRALRQDGIDPVAIVSYLARLGSADDPAPLSFDDLAASYDVRRVSRSAARFDMRQLLALNRRVMHQMPFGAIRDRLPEGATEAFWMAVRGNVDMVSELRHWWDVVGGVIVPPVQDDEGAYLLQALALLPPEPWDAQTWKDWTTAVRDATGRSGKSVFHPLRVALTGEEEGPEMRDLLPLMGHDRVAERLRIAAR.

The 'HIGH' region signature appears at 7-17 (PSPTGLIHVGN). The 'KMSKS' region motif lies at 240 to 244 (KLSKR). Lys243 contacts ATP.

It belongs to the class-I aminoacyl-tRNA synthetase family. Glutamate--tRNA ligase type 1 subfamily. As to quaternary structure, monomer.

The protein localises to the cytoplasm. The catalysed reaction is tRNA(Glu) + L-glutamate + ATP = L-glutamyl-tRNA(Glu) + AMP + diphosphate. Its function is as follows. Catalyzes the attachment of glutamate to tRNA(Glu) in a two-step reaction: glutamate is first activated by ATP to form Glu-AMP and then transferred to the acceptor end of tRNA(Glu). This Gluconacetobacter diazotrophicus (strain ATCC 49037 / DSM 5601 / CCUG 37298 / CIP 103539 / LMG 7603 / PAl5) protein is Glutamate--tRNA ligase 2.